The following is a 65-amino-acid chain: Large ribosomal subunit protein bL35 (65 aa).

Belongs to the bacterial ribosomal protein bL35 family.

The protein is Large ribosomal subunit protein bL35 of Thermotoga petrophila (strain ATCC BAA-488 / DSM 13995 / JCM 10881 / RKU-1).